Here is a 285-residue protein sequence, read N- to C-terminus: MPRFGAHMSISGGVSKSFARGESVGLDSMQIFAKNERQWTAKPISPEEATAFRTEQQRTGIHPVVVHDSYLINLAAPADELREKSIAAFADELERCAQLDIPYLVTHPGAHTGIGEEAGLARVADAICRLLAEGVGGNTMILLETTAGQGTALGYRFEHLARLFELIPYHERLGICVDTCHIFAAGYDIRDPEGYQTTFAELDRLVGLTRVKCFHLNDSQKDLGSRVDRHAHIGQGCIGVEAFRMLVNDPRFADLPMIIETPKGEDMAEDRMNLALLRSLVQGAE.

The Zn(2+) site is built by histidine 67, histidine 107, glutamate 144, aspartate 178, histidine 181, histidine 215, aspartate 228, histidine 230, and glutamate 260.

It belongs to the AP endonuclease 2 family. Zn(2+) serves as cofactor.

It catalyses the reaction Endonucleolytic cleavage to 5'-phosphooligonucleotide end-products.. Endonuclease IV plays a role in DNA repair. It cleaves phosphodiester bonds at apurinic or apyrimidinic (AP) sites, generating a 3'-hydroxyl group and a 5'-terminal sugar phosphate. This is Probable endonuclease 4 from Chloroflexus aurantiacus (strain ATCC 29366 / DSM 635 / J-10-fl).